We begin with the raw amino-acid sequence, 157 residues long: Iron-sulfur cluster repair protein DnrN (157 aa).

The protein belongs to the RIC family.

The protein resides in the cytoplasm. In terms of biological role, di-iron-containing protein involved in the repair of iron-sulfur clusters damaged by oxidative and nitrosative stress conditions. Required to repair damage caused by nitric oxide to FNR and NsrR transcription factors. The protein is Iron-sulfur cluster repair protein DnrN (dnrN) of Neisseria gonorrhoeae.